The primary structure comprises 464 residues: Protein FAM90A23 (464 aa).

Disordered stretches follow at residues 1–42 (MMAR…DPRL), 69–389 (VPAT…HDGA), and 415–437 (HSPE…SEAP). 2 stretches are compositionally biased toward basic and acidic residues: residues 74 to 89 (GKKE…KPRA) and 97 to 114 (NKDK…DPQR). Over residues 180–197 (LASLSPLRKASLSSSSSL) the composition is skewed to low complexity.

Belongs to the FAM90 family.

The chain is Protein FAM90A23 from Homo sapiens (Human).